We begin with the raw amino-acid sequence, 485 residues long: Homeobox protein unplugged (485 aa).

Disordered stretches follow at residues 1–65, 114–157, and 212–325; these read MERP…QEQE, PAGH…DTRF, and GMAQ…RRTA. Residues 54-64 are compositionally biased toward acidic residues; the sequence is RDQEQEAEQEQ. Positions 114–128 are enriched in low complexity; the sequence is PAGHPAAQQPQAQAQ. 2 stretches are compositionally biased toward polar residues: residues 223 to 234 and 254 to 267; these read QAHSSPAKSGSH and DSCS…SPRN. A compositionally biased stretch (acidic residues) spans 284–293; the sequence is DSEDCSDDEG. Residues 308 to 317 show a composition bias toward low complexity; the sequence is SQGNGSSSNS. Positions 319–378 form a DNA-binding region, homeobox; it reads SRRRRTAFTSEQLLELEREFHAKKYLSLTERSQIATSLKLSEVQVKIWFQNRRAKWKRVK.

In terms of tissue distribution, expressed in the neuroectodermal and mesectodermal cells at the ventral midline of stage 8 embryos, Subsequently, expression domains in the CNS widen and have their most anterior border in the posterior deutocerebrum. Oc/otd and unpg are mutual repressors at the interface of their brain-specific expression domains. Expression fades during germ band retraction and is then restricted to subset of cells by stage 14. Expressed in the founder cells of the cerebral branch within the first tracheal metamere. Outside the CNS, expression is seen in two clusters of ectodermal cells located laterally within the labial and first thoracic segments of stage 9 embryos. By stage 13, the expression is detected in a few cells close to the dorsal midline of the embryos.

The protein localises to the nucleus. Plays a regulatory role in neural branching of the tracheae: segment-specific aspects of these neural branching patterns appear to be generated by homeotic regulation of expression. May have a role with oc/otd in the postembryonic development of the brain. The polypeptide is Homeobox protein unplugged (Drosophila melanogaster (Fruit fly)).